The primary structure comprises 313 residues: Olfactory receptor 1J1 (313 aa).

Residues 1 to 25 are Extracellular-facing; the sequence is MRLKNHSSVSEFLLLGFPIRPEQGG. Asn-5 carries an N-linked (GlcNAc...) asparagine glycan. The chain crosses the membrane as a helical span at residues 26-46; the sequence is IFFSLFLAMYLITVLGNLLII. The Cytoplasmic segment spans residues 47–57; it reads LLIRLDSHLHT. The chain crosses the membrane as a helical span at residues 58-78; sequence PMYFFLSHLAFTDISFSSVTV. The Extracellular segment spans residues 79-97; the sequence is PKMLTKVQNQPIPITYEEC. Cys-97 and Cys-189 are disulfide-bonded. Residues 98–118 traverse the membrane as a helical segment; sequence VSQTYFFIFFADLDSFLITSM. Topologically, residues 119–142 are cytoplasmic; it reads AYDRYMAICHPLHYITIMSQSRCA. A helical membrane pass occupies residues 143–163; that stretch reads MLVAVSWVIASACALLHSLLL. At 164-196 the chain is on the extracellular side; that stretch reads DQLSFCADHTVPHFFCDLGALLKLSCSDTSLNQ. The helical transmembrane segment at 197-217 threads the bilayer; it reads LVIFTAGLAAIMLPFLCILIS. Residues 218–240 lie on the Cytoplasmic side of the membrane; that stretch reads YGRIGFTILQVPTTKGICKALST. Residues 241–261 traverse the membrane as a helical segment; the sequence is CGSHLSVVALYYGSIIGLYFL. Over 262–271 the chain is Extracellular; the sequence is PPSNSKINNN. A helical membrane pass occupies residues 272–292; it reads IVASVMYTVVTPMLNPFIYSL. Topologically, residues 293-313 are cytoplasmic; sequence RNKDMKGALKKLLSKKTEFSK.

It belongs to the G-protein coupled receptor 1 family.

It localises to the cell membrane. Odorant receptor. The polypeptide is Olfactory receptor 1J1 (Mus musculus (Mouse)).